The primary structure comprises 213 residues: Receptor-binding cancer antigen expressed on SiSo cells (213 aa).

The Extracellular portion of the chain corresponds to 1 to 6 (MAITQF). Residues 7–27 (RLFKVCTCLATVLSFLKRLIC) form a helical; Signal-anchor for type III membrane protein membrane-spanning segment. Residues 28-213 (RSGRGRKLSG…EQNKMGVKLS (186 aa)) are Cytoplasmic-facing. At Ser36 the chain carries Phosphoserine. Phosphothreonine is present on Thr41. Position 94 is a phosphotyrosine (Tyr94). Positions 168-209 (QAEEVLRQQKIADREKRAAEQQRKKMEKEAQRLLKKEQNKMG) form a coiled coil. A compositionally biased stretch (basic and acidic residues) spans 179–206 (ADREKRAAEQQRKKMEKEAQRLLKKEQN). The tract at residues 179–213 (ADREKRAAEQQRKKMEKEAQRLLKKEQNKMGVKLS) is disordered.

Homodimer.

The protein localises to the golgi apparatus membrane. Its function is as follows. May participate in suppression of cell proliferation and induces apoptotic cell death through activation of interleukin-1-beta converting enzyme (ICE)-like proteases. This is Receptor-binding cancer antigen expressed on SiSo cells (Ebag9) from Rattus norvegicus (Rat).